Here is a 344-residue protein sequence, read N- to C-terminus: Arginine N-succinyltransferase (344 aa).

Leucine 125 contributes to the succinyl-CoA binding site. Histidine 229 acts as the Proton donor in catalysis.

This sequence belongs to the arginine N-succinyltransferase family.

It catalyses the reaction succinyl-CoA + L-arginine = N(2)-succinyl-L-arginine + CoA + H(+). The protein operates within amino-acid degradation; L-arginine degradation via AST pathway; L-glutamate and succinate from L-arginine: step 1/5. Functionally, catalyzes the transfer of succinyl-CoA to arginine to produce N(2)-succinylarginine. This Escherichia coli (strain UTI89 / UPEC) protein is Arginine N-succinyltransferase.